A 917-amino-acid polypeptide reads, in one-letter code: Translation initiation factor IF-2 (917 aa).

Disordered stretches follow at residues Met-1–Gly-84 and Lys-150–Arg-318. Residues Asp-10–Leu-27 are compositionally biased toward polar residues. Low complexity-rich tracts occupy residues Ala-69–Gly-84, Gln-154–Ala-177, and Ser-227–Arg-236. Residues Gly-265 to Pro-274 are compositionally biased toward pro residues. Basic and acidic residues predominate over residues Gly-282–Arg-305. The tr-type G domain occupies Pro-416 to Lys-586. A G1 region spans residues Gly-425 to Thr-432. Residue Gly-425 to Thr-432 coordinates GTP. A G2 region spans residues Gly-450–His-454. The G3 stretch occupies residues Asp-472–Gly-475. GTP is bound by residues Asp-472–His-476 and Asn-526–Asp-529. The interval Asn-526–Asp-529 is G4. The segment at Ser-562–Leu-564 is G5.

It belongs to the TRAFAC class translation factor GTPase superfamily. Classic translation factor GTPase family. IF-2 subfamily.

It is found in the cytoplasm. One of the essential components for the initiation of protein synthesis. Protects formylmethionyl-tRNA from spontaneous hydrolysis and promotes its binding to the 30S ribosomal subunits. Also involved in the hydrolysis of GTP during the formation of the 70S ribosomal complex. This is Translation initiation factor IF-2 from Gluconobacter oxydans (strain 621H) (Gluconobacter suboxydans).